Reading from the N-terminus, the 628-residue chain is Chaperone protein HtpG (628 aa).

Residues 1–337 are a; substrate-binding; that stretch reads MSEKKYTFET…SADLPLNVSR (337 aa). Positions 338 to 554 are b; sequence EILQHNKVID…DYGMSLHMQK (217 aa). The segment at 555 to 628 is c; sequence MMEEAGQGFM…FVKLVNKYIR (74 aa).

Belongs to the heat shock protein 90 family. Homodimer.

The protein resides in the cytoplasm. Its function is as follows. Molecular chaperone. Has ATPase activity. This chain is Chaperone protein HtpG, found in Francisella tularensis subsp. novicida (strain U112).